Here is a 121-residue protein sequence, read N- to C-terminus: uncharacterized protein (121 aa).

The 55-residue stretch at 47-101 (SEVPHYHAEHDLTFTVLKGKGELYLEGEKKKLKEGDWAFIPKGAVHFYRNTSELS) folds into the Cupin type-2 domain.

This is an uncharacterized protein from Aquifex aeolicus (strain VF5).